The sequence spans 705 residues: Polyribonucleotide nucleotidyltransferase (705 aa).

2 residues coordinate Mg(2+): D485 and D491. Residues 552-611 form the KH domain; it reads PKVFTMSINPSKIKDVIGAGGKTINKIIDETGVKIDIKEDGSVFVTAEDYESGKKALAMI. The region spanning 621 to 689 is the S1 motif domain; it reads GEVYLGKVTK…SMGRVNLSRK (69 aa).

It belongs to the polyribonucleotide nucleotidyltransferase family. The cofactor is Mg(2+).

It is found in the cytoplasm. The enzyme catalyses RNA(n+1) + phosphate = RNA(n) + a ribonucleoside 5'-diphosphate. In terms of biological role, involved in mRNA degradation. Catalyzes the phosphorolysis of single-stranded polyribonucleotides processively in the 3'- to 5'-direction. The sequence is that of Polyribonucleotide nucleotidyltransferase from Clostridium novyi (strain NT).